The chain runs to 310 residues: GPN-loop GTPase 2 (310 aa).

Alanine 2 bears the N-acetylalanine mark. A GTP-binding site is contributed by 19–24; sequence GSGKTT. The Gly-Pro-Asn (GPN)-loop; involved in dimer interface signature appears at 76–78; sequence GPN. Residue 178–181 participates in GTP binding; sequence SKMD.

This sequence belongs to the GPN-loop GTPase family. As to quaternary structure, heterodimers with GPN1 or GPN3. Binds to RNA polymerase II (RNAPII).

Its function is as follows. Small GTPase required for proper localization of RNA polymerase II and III (RNAPII and RNAPIII). May act at an RNAP assembly step prior to nuclear import. The polypeptide is GPN-loop GTPase 2 (Sus scrofa (Pig)).